The sequence spans 149 residues: Arginine repressor (149 aa).

Belongs to the ArgR family.

The protein resides in the cytoplasm. Its pathway is amino-acid biosynthesis; L-arginine biosynthesis [regulation]. In terms of biological role, regulates arginine biosynthesis genes. The protein is Arginine repressor of Geobacillus thermodenitrificans (strain NG80-2).